Consider the following 79-residue polypeptide: Small ribosomal subunit protein bS16c (79 aa).

Belongs to the bacterial ribosomal protein bS16 family.

It localises to the plastid. It is found in the chloroplast. The sequence is that of Small ribosomal subunit protein bS16c from Staurastrum punctulatum (Green alga).